The chain runs to 885 residues: Translation initiation factor IF-2 (885 aa).

The segment covering 123–232 (ETEAKAKAEA…EAERYSDHHI (110 aa)) has biased composition (basic and acidic residues). Residues 123 to 289 (ETEAKAKAEA…RNRSTAPESM (167 aa)) are disordered. Residues 253-266 (GRRARNKNTAKTKR) are compositionally biased toward basic residues. Residues 267–276 (GGKDARDGRE) are compositionally biased toward basic and acidic residues. Positions 385–554 (PRAPVVTIMG…LLQAEVLELK (170 aa)) constitute a tr-type G domain. Positions 394–401 (GHVDHGKT) are G1. Residue 394-401 (GHVDHGKT) coordinates GTP. A G2 region spans residues 419-423 (GITQH). A G3 region spans residues 440–443 (DTPG). Residues 440–444 (DTPGH) and 494–497 (NKMD) each bind GTP. A G4 region spans residues 494 to 497 (NKMD). Residues 530 to 532 (SAK) form a G5 region.

This sequence belongs to the TRAFAC class translation factor GTPase superfamily. Classic translation factor GTPase family. IF-2 subfamily.

The protein resides in the cytoplasm. Its function is as follows. One of the essential components for the initiation of protein synthesis. Protects formylmethionyl-tRNA from spontaneous hydrolysis and promotes its binding to the 30S ribosomal subunits. Also involved in the hydrolysis of GTP during the formation of the 70S ribosomal complex. This is Translation initiation factor IF-2 from Shewanella oneidensis (strain ATCC 700550 / JCM 31522 / CIP 106686 / LMG 19005 / NCIMB 14063 / MR-1).